The primary structure comprises 501 residues: Raftlin-2 (501 aa).

Disordered stretches follow at residues 1–20 (MGCGLRKLEDPDDSSPGKIF) and 196–239 (SWNE…RKGE). A lipid anchor (N-myristoyl glycine) is attached at Gly-2. Cys-3 carries S-palmitoyl cysteine lipidation. The span at 220–233 (GQYQMEQNGSPTSS) shows a compositional bias: polar residues. Phosphoserine is present on Ser-405. Positions 407–449 (AQTPDKKASRHIKGEDKNKATSRSIGLDTTSSQPAESRHLPEE) are disordered. At Thr-409 the chain carries Phosphothreonine. The segment covering 410–425 (PDKKASRHIKGEDKNK) has biased composition (basic and acidic residues). The segment covering 427 to 441 (TSRSIGLDTTSSQPA) has biased composition (polar residues). At Ser-430 the chain carries Phosphoserine.

It belongs to the raftlin family.

The protein localises to the cell membrane. In terms of biological role, upon bacterial lipopolysaccharide stimulation, mediates clathrin-dependent internalization of TLR4 in dendritic cells, resulting in activation of TICAM1-mediated signaling and subsequent IFNB1 production. May regulate B-cell antigen receptor-mediated signaling. This chain is Raftlin-2 (RFTN2), found in Homo sapiens (Human).